Reading from the N-terminus, the 310-residue chain is Protease HtpX homolog (310 aa).

The next 2 helical transmembrane spans lie at 7 to 27 and 29 to 49; these read SVML…LIGG and AGMT…YWYS. Zn(2+) is bound at residue histidine 131. Glutamate 132 is an active-site residue. Residue histidine 135 coordinates Zn(2+). The next 2 helical transmembrane spans lie at 141–161 and 178–198; these read ILIG…ASMA and PLGF…AALI. Zn(2+) is bound at residue glutamate 207. Residues 277–310 form a disordered region; that stretch reads LTGARPQSGGAPSGPERTARNAEDSAKDFWDSLK. A compositionally biased stretch (basic and acidic residues) spans 293–310; that stretch reads RTARNAEDSAKDFWDSLK.

This sequence belongs to the peptidase M48B family. Requires Zn(2+) as cofactor.

The protein localises to the cell inner membrane. The protein is Protease HtpX homolog of Desulfatibacillum aliphaticivorans.